We begin with the raw amino-acid sequence, 805 residues long: Leucine--tRNA ligase (805 aa).

The 'HIGH' region motif lies at 40–51 (PYPSGSGLHVGH). Positions 576 to 580 (KMSKS) match the 'KMSKS' region motif. An ATP-binding site is contributed by K579.

It belongs to the class-I aminoacyl-tRNA synthetase family.

It localises to the cytoplasm. It catalyses the reaction tRNA(Leu) + L-leucine + ATP = L-leucyl-tRNA(Leu) + AMP + diphosphate. This is Leucine--tRNA ligase from Chlorobium phaeovibrioides (strain DSM 265 / 1930) (Prosthecochloris vibrioformis (strain DSM 265)).